The following is a 201-amino-acid chain: Small ribosomal subunit protein uS5 (201 aa).

Positions 1–27 (MAGPQRRGSGAGGGERRDRKGRDGGAA) are disordered. The segment covering 14–23 (GERRDRKGRD) has biased composition (basic and acidic residues). The S5 DRBM domain maps to 34–97 (YVERVVAINR…EEAKKHFFKV (64 aa)).

The protein belongs to the universal ribosomal protein uS5 family. As to quaternary structure, part of the 30S ribosomal subunit. Contacts proteins S4 and S8.

With S4 and S12 plays an important role in translational accuracy. In terms of biological role, located at the back of the 30S subunit body where it stabilizes the conformation of the head with respect to the body. This is Small ribosomal subunit protein uS5 from Streptomyces avermitilis (strain ATCC 31267 / DSM 46492 / JCM 5070 / NBRC 14893 / NCIMB 12804 / NRRL 8165 / MA-4680).